Here is a 565-residue protein sequence, read N- to C-terminus: Ubiquitin carboxyl-terminal hydrolase 21 (565 aa).

The span at 1-14 (MPQASEHRLGRTRE) shows a compositional bias: basic and acidic residues. Disordered stretches follow at residues 1-103 (MPQA…LPLP), 109-128 (ARSKSVSSGDLRPMGIALGG), and 142-163 (LALRPEPPPLRRSTSLRRLGGF). A compositionally biased stretch (pro residues) spans 42–57 (APGPNPMLRPLPPRPG). Residues 58–70 (PPEERLKKLELGR) are compositionally biased toward basic and acidic residues. Low complexity predominate over residues 71 to 82 (GRTSGPRPSGPL). A Nuclear export signal motif is present at residues 134-152 (ELGAALSRLALRPEPPPLR). The 347-residue stretch at 212-558 (VGLRNLGNTC…EGYVLFYQLM (347 aa)) folds into the USP domain. C221 functions as the Nucleophile in the catalytic mechanism. 4 residues coordinate Zn(2+): C384, C387, C437, and C440. H518 serves as the catalytic Proton acceptor.

Belongs to the peptidase C19 family. USP21 subfamily. In terms of assembly, interacts with BEND3.

Its subcellular location is the cytoplasm. It localises to the nucleus. It catalyses the reaction Thiol-dependent hydrolysis of ester, thioester, amide, peptide and isopeptide bonds formed by the C-terminal Gly of ubiquitin (a 76-residue protein attached to proteins as an intracellular targeting signal).. In terms of biological role, deubiquitinating enzyme that hydrolyzes 'Lys-6'- and 'Lys-11'-linked polyubiquitin. Also hydrolyzes heterotypic (mixed and branched) and homotypic chains. Important regulator of energy metabolism. Glucose and fatty acids trigger its nuclear translocation by CBP-dependent acetylation. In the nucleus, deubiquitinates and stabilizes the nuclear receptor PPARD regulating the expression of various genes involved in glucose and lipid metabolism and oxidative phosphorylation. Also acts as a negative regulator of the ribosome quality control (RQC) by mediating deubiquitination of 40S ribosomal proteins RPS10/eS10 and RPS20/uS10, thereby antagonizing ZNF598-mediated 40S ubiquitination. In Bos taurus (Bovine), this protein is Ubiquitin carboxyl-terminal hydrolase 21 (USP21).